A 434-amino-acid chain; its full sequence is Enolase (434 aa).

Residue Gln-167 coordinates (2R)-2-phosphoglycerate. Glu-209 (proton donor) is an active-site residue. Residues Asp-246, Glu-291, and Asp-318 each coordinate Mg(2+). Lys-343, Arg-372, Ser-373, and Lys-394 together coordinate (2R)-2-phosphoglycerate. Catalysis depends on Lys-343, which acts as the Proton acceptor.

The protein belongs to the enolase family. Component of the RNA degradosome, a multiprotein complex involved in RNA processing and mRNA degradation. It depends on Mg(2+) as a cofactor.

The protein localises to the cytoplasm. It is found in the secreted. Its subcellular location is the cell surface. It catalyses the reaction (2R)-2-phosphoglycerate = phosphoenolpyruvate + H2O. It functions in the pathway carbohydrate degradation; glycolysis; pyruvate from D-glyceraldehyde 3-phosphate: step 4/5. Functionally, catalyzes the reversible conversion of 2-phosphoglycerate (2-PG) into phosphoenolpyruvate (PEP). It is essential for the degradation of carbohydrates via glycolysis. The protein is Enolase of Buchnera aphidicola subsp. Schizaphis graminum (strain Sg).